Reading from the N-terminus, the 60-residue chain is Large ribosomal subunit protein uL30 (60 aa).

Belongs to the universal ribosomal protein uL30 family. Part of the 50S ribosomal subunit.

This is Large ribosomal subunit protein uL30 from Flavobacterium psychrophilum (strain ATCC 49511 / DSM 21280 / CIP 103535 / JIP02/86).